Reading from the N-terminus, the 707-residue chain is Heat shock protein hsp88 (707 aa).

The span at 662–692 shows a compositional bias: basic and acidic residues; it reads EAEKAAKKAEEEARKAKEAAEKAAQEGAKDD. The disordered stretch occupies residues 662–707; that stretch reads EAEKAAKKAEEEARKAKEAAEKAAQEGAKDDEMTDADAPKPVVEEA.

It belongs to the heat shock protein 70 family. In terms of assembly, binds hsp30 independent of temperature or substrate. The N-terminus is blocked.

The protein localises to the cytoplasm. The sequence is that of Heat shock protein hsp88 (hsp88) from Neurospora crassa (strain ATCC 24698 / 74-OR23-1A / CBS 708.71 / DSM 1257 / FGSC 987).